The chain runs to 185 residues: Ribosome-recycling factor (185 aa).

Belongs to the RRF family.

Its subcellular location is the cytoplasm. Responsible for the release of ribosomes from messenger RNA at the termination of protein biosynthesis. May increase the efficiency of translation by recycling ribosomes from one round of translation to another. This is Ribosome-recycling factor from Shewanella pealeana (strain ATCC 700345 / ANG-SQ1).